A 141-amino-acid chain; its full sequence is Hemoglobin subunit alpha (141 aa).

Residues 1–141 (VLSSKDKANI…VSTVLTSKYR (141 aa)) form the Globin domain. Serine 3 is modified (phosphoserine). N6-succinyllysine occurs at positions 7 and 11. Position 16 is an N6-acetyllysine; alternate (lysine 16). Lysine 16 carries the post-translational modification N6-succinyllysine; alternate. Tyrosine 24 is modified (phosphotyrosine). Lysine 40 carries the post-translational modification N6-succinyllysine. Serine 49 is modified (phosphoserine). Residue histidine 58 participates in O2 binding. Position 87 (histidine 87) interacts with heme b. Position 102 is a phosphoserine (serine 102). The residue at position 108 (threonine 108) is a Phosphothreonine. At serine 124 the chain carries Phosphoserine. Threonine 134 and threonine 137 each carry phosphothreonine. At serine 138 the chain carries Phosphoserine.

Belongs to the globin family. As to quaternary structure, heterotetramer of two alpha chains and two beta chains. In terms of tissue distribution, red blood cells.

Involved in oxygen transport from the lung to the various peripheral tissues. Its function is as follows. Hemopressin acts as an antagonist peptide of the cannabinoid receptor CNR1. Hemopressin-binding efficiently blocks cannabinoid receptor CNR1 and subsequent signaling. This Lama glama (Llama) protein is Hemoglobin subunit alpha (HBA).